Consider the following 183-residue polypeptide: Ribosome maturation factor RimM (183 aa).

The region spanning 95 to 171 is the PRC barrel domain; it reads DPDEFYDHEL…VVVIDPPEGL (77 aa).

This sequence belongs to the RimM family. As to quaternary structure, binds ribosomal protein uS19.

The protein localises to the cytoplasm. An accessory protein needed during the final step in the assembly of 30S ribosomal subunit, possibly for assembly of the head region. Essential for efficient processing of 16S rRNA. May be needed both before and after RbfA during the maturation of 16S rRNA. It has affinity for free ribosomal 30S subunits but not for 70S ribosomes. The polypeptide is Ribosome maturation factor RimM (Rhodococcus opacus (strain B4)).